The following is a 154-amino-acid chain: Myoglobin (154 aa).

The region spanning 2–148 (GLSDGEWQLV…FRHDMAAKYK (147 aa)) is the Globin domain. A Phosphoserine modification is found at S4. H65 provides a ligand contact to nitrite. Residue H65 participates in O2 binding. At T68 the chain carries Phosphothreonine. A heme b-binding site is contributed by H94.

It belongs to the globin family. As to quaternary structure, monomeric.

Its subcellular location is the cytoplasm. It localises to the sarcoplasm. It catalyses the reaction Fe(III)-heme b-[protein] + nitric oxide + H2O = Fe(II)-heme b-[protein] + nitrite + 2 H(+). It carries out the reaction H2O2 + AH2 = A + 2 H2O. Monomeric heme protein which primary function is to store oxygen and facilitate its diffusion within muscle tissues. Reversibly binds oxygen through a pentacoordinated heme iron and enables its timely and efficient release as needed during periods of heightened demand. Depending on the oxidative conditions of tissues and cells, and in addition to its ability to bind oxygen, it also has a nitrite reductase activity whereby it regulates the production of bioactive nitric oxide. Under stress conditions, like hypoxia and anoxia, it also protects cells against reactive oxygen species thanks to its pseudoperoxidase activity. The polypeptide is Myoglobin (MB) (Osphranter rufus (Red kangaroo)).